We begin with the raw amino-acid sequence, 156 residues long: METSEEENFGVAVSSPSDAEFDAVVGYLEDIIMDDDFQSIQRTFMEKHYQEFDDSEENKLIYTSIFNEYISLIEKYIEEKLLDRIPGFNMTAFTMSLQQHKDEMAGDIFDMLLTFTDFLAFKEMFLDYRAEKEGRSLDLSGGLVVTSLNKSSVSSS.

Belongs to the ARL2BP family.

It localises to the cytoplasm. It is found in the mitochondrion intermembrane space. Its subcellular location is the cytoskeleton. The protein resides in the microtubule organizing center. The protein localises to the centrosome. It localises to the nucleus. It is found in the spindle. Its subcellular location is the cilium basal body. In terms of biological role, plays a role as an effector of the ADP-ribosylation factor-like protein 2, ARL2. The polypeptide is ADP-ribosylation factor-like protein 2-binding protein (ARL2BP) (Gallus gallus (Chicken)).